The following is a 385-amino-acid chain: MSEILVLNCGSSSVKFALINPHTSQSLVTGLAENIATKNCKVVFKAEHKIEKYLENGSYKDVFEMLKDFLVENKHLEKIVAIGHRVVHGGQYFSKSVLINADSLEKIKACIALAPLHNPAHIEGIRFCQQIFPELPQVAVFDTAFHQTVPSYIAEYAIPYELTHKHNIRKYGAHGTSHKYVSEQAAKILTQQKANVIVAHLGNGCSITAVVDGKSIDTSMGLTPLDGLVMGTRSGCIDPSIFAYIISDNLGWSVTEITNMLNKQSGLLGICGHNDMREVSQLAAKGDSLAKLAIEIFSHRVAKFVASYMIYFNKLDALVFTGGIGENAANIRKNIISKLANLGFMIDHQKNSNSETFINSKNSHNIMVIATNEELMIAQETQNLI.

Mg(2+) is bound at residue asparagine 8. Lysine 15 contacts ATP. Position 85 (arginine 85) interacts with substrate. Residue aspartate 142 is the Proton donor/acceptor of the active site. ATP-binding positions include histidine 200 to glycine 204, aspartate 275 to arginine 277, and glycine 323 to asparagine 327. Glutamate 373 is a Mg(2+) binding site.

Belongs to the acetokinase family. In terms of assembly, homodimer. It depends on Mg(2+) as a cofactor. The cofactor is Mn(2+).

It localises to the cytoplasm. It catalyses the reaction acetate + ATP = acetyl phosphate + ADP. It functions in the pathway metabolic intermediate biosynthesis; acetyl-CoA biosynthesis; acetyl-CoA from acetate: step 1/2. Catalyzes the formation of acetyl phosphate from acetate and ATP. Can also catalyze the reverse reaction. This chain is Acetate kinase, found in Francisella tularensis subsp. holarctica (strain OSU18).